The primary structure comprises 128 residues: Methylglyoxal synthase (128 aa).

Residues 1 to 128 enclose the MGS-like domain; that stretch reads MRIALIAHDR…MQDHPGNRQA (128 aa). Residues histidine 8, lysine 12, 34–37, and 54–55 each bind substrate; these read TGTT and SG. Catalysis depends on aspartate 60, which acts as the Proton donor/acceptor. Histidine 87 contacts substrate.

This sequence belongs to the methylglyoxal synthase family.

The catalysed reaction is dihydroxyacetone phosphate = methylglyoxal + phosphate. Catalyzes the formation of methylglyoxal from dihydroxyacetone phosphate. The sequence is that of Methylglyoxal synthase from Moorella thermoacetica (strain ATCC 39073 / JCM 9320).